Here is a 754-residue protein sequence, read N- to C-terminus: RNA exonuclease 5 (754 aa).

Residues 1-36 (MELEEEENPRKRKETPNSALTTELDRPSWDVQDPEP) form a disordered region. An Exonuclease domain is found at 222–370 (LFGLDCEVCL…EDARTALELV (149 aa)). 2 consecutive RRM domains span residues 488 to 562 (STIY…RLLT) and 583 to 662 (GTIY…RHLQ).

The sequence is that of RNA exonuclease 5 (Rexo5) from Rattus norvegicus (Rat).